A 117-amino-acid polypeptide reads, in one-letter code: Holo-[acyl-carrier-protein] synthase (117 aa).

The Mg(2+) site is built by aspartate 8 and glutamate 55.

Belongs to the P-Pant transferase superfamily. AcpS family. The cofactor is Mg(2+).

The protein localises to the cytoplasm. The catalysed reaction is apo-[ACP] + CoA = holo-[ACP] + adenosine 3',5'-bisphosphate + H(+). Functionally, transfers the 4'-phosphopantetheine moiety from coenzyme A to a Ser of acyl-carrier-protein. This is Holo-[acyl-carrier-protein] synthase from Finegoldia magna (strain ATCC 29328 / DSM 20472 / WAL 2508) (Peptostreptococcus magnus).